The following is a 156-amino-acid chain: ATP synthase subunit b 1 (156 aa).

Residues 7-29 traverse the membrane as a helical segment; the sequence is LLGQAISFALFVWFCMKYVWPPL.

It belongs to the ATPase B chain family. As to quaternary structure, F-type ATPases have 2 components, F(1) - the catalytic core - and F(0) - the membrane proton channel. F(1) has five subunits: alpha(3), beta(3), gamma(1), delta(1), epsilon(1). F(0) has three main subunits: a(1), b(2) and c(10-14). The alpha and beta chains form an alternating ring which encloses part of the gamma chain. F(1) is attached to F(0) by a central stalk formed by the gamma and epsilon chains, while a peripheral stalk is formed by the delta and b chains.

It is found in the cell inner membrane. Functionally, f(1)F(0) ATP synthase produces ATP from ADP in the presence of a proton or sodium gradient. F-type ATPases consist of two structural domains, F(1) containing the extramembraneous catalytic core and F(0) containing the membrane proton channel, linked together by a central stalk and a peripheral stalk. During catalysis, ATP synthesis in the catalytic domain of F(1) is coupled via a rotary mechanism of the central stalk subunits to proton translocation. In terms of biological role, component of the F(0) channel, it forms part of the peripheral stalk, linking F(1) to F(0). The sequence is that of ATP synthase subunit b 1 from Vibrio campbellii (strain ATCC BAA-1116).